The sequence spans 976 residues: 5'-3' exoribonuclease 2 homolog (976 aa).

Residues 264-281 form a CCHC-type zinc finger; the sequence is RACELCGQYGHELKECRG. A compositionally biased stretch (basic and acidic residues) spans 411–420; the sequence is DEERFKENQK. The tract at residues 411–442 is disordered; it reads DEERFKENQKNKKARMQQYGRGRGGRGRGRGQ. The interaction with paxt-1 stretch occupies residues 535–788; it reads DIRLYESGWK…GICVLYEDPE (254 aa). Residues 815 to 976 form a disordered region; sequence WNERRDGRFN…GGYQGNSSWR (162 aa). Residues 856-866 show a composition bias toward low complexity; it reads DRQGGNDNYRG.

It belongs to the 5'-3' exonuclease family. XRN2/RAT1 subfamily. As to quaternary structure, interacts with paxt-1 (via N-terminus); the interaction is direct and results in stabilization of xrn-2 in the complex.

The protein resides in the nucleus. Possesses 5'-&gt;3' exoribonuclease activity. Plays a role in maintenance of steady-state concentration and turnover of microRNAs (miRNA) by degradation of mature miRNA. Degradation role is enhanced when in complex with paxt-1. Partially redundant to xrn-1 in miRNA guide strand degradation. Implicated in differential regulation of mRNAs such as let-7 by controlling the accumulation of mature miRNA. Positively regulates molting of the pharyngeal cuticle. This chain is 5'-3' exoribonuclease 2 homolog, found in Caenorhabditis briggsae.